Here is a 103-residue protein sequence, read N- to C-terminus: Pyrimidine/purine nucleoside phosphorylase (103 aa).

The protein belongs to the nucleoside phosphorylase PpnP family.

The enzyme catalyses a purine D-ribonucleoside + phosphate = a purine nucleobase + alpha-D-ribose 1-phosphate. It catalyses the reaction adenosine + phosphate = alpha-D-ribose 1-phosphate + adenine. The catalysed reaction is cytidine + phosphate = cytosine + alpha-D-ribose 1-phosphate. It carries out the reaction guanosine + phosphate = alpha-D-ribose 1-phosphate + guanine. The enzyme catalyses inosine + phosphate = alpha-D-ribose 1-phosphate + hypoxanthine. It catalyses the reaction thymidine + phosphate = 2-deoxy-alpha-D-ribose 1-phosphate + thymine. The catalysed reaction is uridine + phosphate = alpha-D-ribose 1-phosphate + uracil. It carries out the reaction xanthosine + phosphate = alpha-D-ribose 1-phosphate + xanthine. Its function is as follows. Catalyzes the phosphorolysis of diverse nucleosides, yielding D-ribose 1-phosphate and the respective free bases. Can use uridine, adenosine, guanosine, cytidine, thymidine, inosine and xanthosine as substrates. Also catalyzes the reverse reactions. In Shewanella baltica (strain OS195), this protein is Pyrimidine/purine nucleoside phosphorylase.